The following is an 838-amino-acid chain: Probable inorganic carbon transporter subunit DabA (838 aa).

4 residues coordinate Zn(2+): C353, D355, H537, and C552.

Belongs to the inorganic carbon transporter (TC 9.A.2) DabA family. In terms of assembly, forms a complex with DabB. Zn(2+) serves as cofactor.

The protein localises to the cell membrane. Part of an energy-coupled inorganic carbon pump. The protein is Probable inorganic carbon transporter subunit DabA of Roseiflexus sp. (strain RS-1).